The sequence spans 587 residues: Aspartate--tRNA ligase (587 aa).

Residue Glu-174 participates in L-aspartate binding. The tract at residues 198-201 (QITK) is aspartate. L-aspartate is bound at residue Arg-220. ATP-binding positions include 220–222 (RDE) and Gln-229. His-443 is a binding site for L-aspartate. Glu-477 serves as a coordination point for ATP. Residue Arg-484 coordinates L-aspartate. 529–532 (GLDR) contacts ATP.

This sequence belongs to the class-II aminoacyl-tRNA synthetase family. Type 1 subfamily. In terms of assembly, homodimer.

Its subcellular location is the cytoplasm. The catalysed reaction is tRNA(Asp) + L-aspartate + ATP = L-aspartyl-tRNA(Asp) + AMP + diphosphate. In terms of biological role, catalyzes the attachment of L-aspartate to tRNA(Asp) in a two-step reaction: L-aspartate is first activated by ATP to form Asp-AMP and then transferred to the acceptor end of tRNA(Asp). The chain is Aspartate--tRNA ligase from Streptococcus pneumoniae (strain Taiwan19F-14).